The primary structure comprises 220 residues: Guanylate kinase (220 aa).

In terms of domain architecture, Guanylate kinase-like spans 15 to 194; sequence GLMLVISSPS…AFDAVQSIVK (180 aa). 22 to 29 contacts ATP; that stretch reads SPSGAGKS.

This sequence belongs to the guanylate kinase family.

It is found in the cytoplasm. The enzyme catalyses GMP + ATP = GDP + ADP. Essential for recycling GMP and indirectly, cGMP. The chain is Guanylate kinase from Rhizobium etli (strain ATCC 51251 / DSM 11541 / JCM 21823 / NBRC 15573 / CFN 42).